A 277-amino-acid polypeptide reads, in one-letter code: MAIKKYKPTSNGRRGMTTSDFAEITTDKPEKSLLAPLHKKGGRNNQGKLTVRHQGGGHKRQYRVIDFKRDKDGIPGRVATVEYDPNRSANIALINYADGEKRYILAPKGIQVGTEIMSGPEADIKVGNALPLINIPVGTVVHNIELKPGKGGQLVRSAGTSAQVLGKEGKYVLVRLNSGEVRMILSACRASIGQVGNEQHELINIGKAGRSRWKGIRPTVRGSVMNPNDHPHGGGEGRAPIGRKSPMSPWGKPTLGFKTRKKKNKSDKFIVRRRKNK.

Positions 219–277 (TVRGSVMNPNDHPHGGGEGRAPIGRKSPMSPWGKPTLGFKTRKKKNKSDKFIVRRRKNK) are disordered. Positions 258-277 (KTRKKKNKSDKFIVRRRKNK) are enriched in basic residues.

This sequence belongs to the universal ribosomal protein uL2 family. Part of the 50S ribosomal subunit. Forms a bridge to the 30S subunit in the 70S ribosome.

One of the primary rRNA binding proteins. Required for association of the 30S and 50S subunits to form the 70S ribosome, for tRNA binding and peptide bond formation. It has been suggested to have peptidyltransferase activity; this is somewhat controversial. Makes several contacts with the 16S rRNA in the 70S ribosome. The chain is Large ribosomal subunit protein uL2 from Bacillus subtilis (strain 168).